A 111-amino-acid polypeptide reads, in one-letter code: NADH-ubiquinone oxidoreductase chain 4 (111 aa).

A helical membrane pass occupies residues 35–55; it reads LITSLFSWLDITVFLTGLSAF.

This sequence belongs to the complex I subunit 4 family.

It localises to the mitochondrion membrane. The enzyme catalyses a ubiquinone + NADH + 5 H(+)(in) = a ubiquinol + NAD(+) + 4 H(+)(out). Its function is as follows. Core subunit of the mitochondrial membrane respiratory chain NADH dehydrogenase (Complex I) that is believed to belong to the minimal assembly required for catalysis. Complex I functions in the transfer of electrons from NADH to the respiratory chain. The immediate electron acceptor for the enzyme is believed to be ubiquinone. In Caiman crocodilus (Spectacled caiman), this protein is NADH-ubiquinone oxidoreductase chain 4 (MT-ND4).